Reading from the N-terminus, the 122-residue chain is MSITKDQILEALAAMSVMEVVELIEAMEEKFGVSAAAAVVSGGADAGAAAEEKTEFDVVMTSHGDNKVAVIKALRGATGLGLKEAKGMAESAPVAVKEGISKEEAEALKKELEEAGAQVEIK.

The protein belongs to the bacterial ribosomal protein bL12 family. As to quaternary structure, homodimer. Part of the ribosomal stalk of the 50S ribosomal subunit. Forms a multimeric L10(L12)X complex, where L10 forms an elongated spine to which 2 to 4 L12 dimers bind in a sequential fashion. Binds GTP-bound translation factors.

Its function is as follows. Forms part of the ribosomal stalk which helps the ribosome interact with GTP-bound translation factors. Is thus essential for accurate translation. This is Large ribosomal subunit protein bL12 from Shewanella loihica (strain ATCC BAA-1088 / PV-4).